Here is a 211-residue protein sequence, read N- to C-terminus: Proteasome subunit beta (211 aa).

Positions 1 to 9 (MDNDKYLKG) are cleaved as a propeptide — removed in mature form; by autocatalysis. Residue Thr-10 is the Nucleophile of the active site.

Belongs to the peptidase T1B family. As to quaternary structure, the 20S proteasome core is composed of 14 alpha and 14 beta subunits that assemble into four stacked heptameric rings, resulting in a barrel-shaped structure. The two inner rings, each composed of seven catalytic beta subunits, are sandwiched by two outer rings, each composed of seven alpha subunits. The catalytic chamber with the active sites is on the inside of the barrel. Has a gated structure, the ends of the cylinder being occluded by the N-termini of the alpha-subunits. Is capped at one or both ends by the proteasome regulatory ATPase, PAN.

The protein resides in the cytoplasm. The catalysed reaction is Cleavage of peptide bonds with very broad specificity.. Its activity is regulated as follows. The formation of the proteasomal ATPase PAN-20S proteasome complex, via the docking of the C-termini of PAN into the intersubunit pockets in the alpha-rings, triggers opening of the gate for substrate entry. Interconversion between the open-gate and close-gate conformations leads to a dynamic regulation of the 20S proteasome proteolysis activity. Its function is as follows. Component of the proteasome core, a large protease complex with broad specificity involved in protein degradation. This Methanosarcina barkeri (strain Fusaro / DSM 804) protein is Proteasome subunit beta.